The sequence spans 411 residues: Carbamoyl phosphate synthase arginine-specific small chain (411 aa).

Residues S50, G232, and G234 each coordinate L-glutamine. One can recognise a Glutamine amidotransferase type-1 domain in the interval 185–376 (NVALIDCGVK…FDNIEKYQLQ (192 aa)). The active-site Nucleophile is C264. L-glutamine is bound by residues L265, Q268, N306, G308, and Y309. Residues H349 and E351 contribute to the active site.

It belongs to the CarA family. In terms of assembly, heterodimer composed of 2 chains; the small (or glutamine) chain promotes the hydrolysis of glutamine to ammonia, which is used by the large (or ammonia) chain to synthesize carbamoyl phosphate.

The protein localises to the cytoplasm. The catalysed reaction is hydrogencarbonate + L-glutamine + 2 ATP + H2O = carbamoyl phosphate + L-glutamate + 2 ADP + phosphate + 2 H(+). It catalyses the reaction L-glutamine + H2O = L-glutamate + NH4(+). It participates in amino-acid biosynthesis; L-arginine biosynthesis; carbamoyl phosphate from bicarbonate: step 1/1. Functionally, small subunit of the arginine-specific carbamoyl phosphate synthase (CPSase). CPSase catalyzes the formation of carbamoyl phosphate from the ammonia moiety of glutamine, carbonate, and phosphate donated by ATP, constituting the first step of 2 biosynthetic pathways, one leading to arginine and/or urea and the other to pyrimidine nucleotides. The small subunit (glutamine amidotransferase) binds and cleaves glutamine to supply the large subunit with the substrate ammonia. The sequence is that of Carbamoyl phosphate synthase arginine-specific small chain (CPA1) from Saccharomyces cerevisiae (strain ATCC 204508 / S288c) (Baker's yeast).